A 61-amino-acid chain; its full sequence is Large ribosomal subunit protein bL28 (61 aa).

It belongs to the bacterial ribosomal protein bL28 family.

This chain is Large ribosomal subunit protein bL28, found in Lacticaseibacillus paracasei (strain ATCC 334 / BCRC 17002 / CCUG 31169 / CIP 107868 / KCTC 3260 / NRRL B-441) (Lactobacillus paracasei).